We begin with the raw amino-acid sequence, 375 residues long: Pulmonary surfactant-associated protein D (375 aa).

Residues 1-21 (MLLFLLSALVLLTQSLGYLEA) form the signal peptide. S-nitrosocysteine occurs at positions 35 and 40. The tract at residues 43–221 (VESGLPGRDG…DKGAKGESGL (179 aa)) is disordered. Residues 46–222 (GLPGRDGRDG…KGAKGESGLP (177 aa)) form the Collagen-like domain. Residues 50 to 65 (RDGRDGREGPRGEKGD) are compositionally biased toward basic and acidic residues. P78 carries the 4-hydroxyproline modification. Position 87 is a 5-hydroxylysine (K87). N90 is a glycosylation site (N-linked (GlcNAc...) asparagine). Position 96 is a 4-hydroxyproline (P96). K99 carries the post-translational modification 5-hydroxylysine. The segment covering 105–114 (SGPPGPPGVP) has biased composition (pro residues). Low complexity-rich tracts occupy residues 116-132 (PAGR…IGPQ) and 138-150 (KGEA…VGAP). Residues P171 and P177 each carry the 4-hydroxyproline modification. Over residues 173 to 189 (ERGAPGNAGAAGSAGVM) the composition is skewed to low complexity. Positions 204-216 (KGDKGVPGDKGAK) are enriched in basic and acidic residues. Positions 223 to 251 (DVASLRQQVEALQKQVQHLQAAFSQYKKV) form a coiled coil. Residues 260–374 (VGEKIFKTAG…CGEKRLVVCE (115 aa)) form the C-type lectin domain. 2 disulfide bridges follow: C281–C373 and C351–C365.

The protein belongs to the SFTPD family. Oligomeric complex of 4 set of homotrimers. Hydroxylation on proline residues within the sequence motif, GXPG, is most likely to be 4-hydroxy as this fits the requirement for 4-hydroxylation in vertebrates. In terms of processing, S-nitrosylation at Cys-35 and Cys-40 alters the quaternary structure which results in a pro-inflammatory chemoattractive signaling activity with macrophages.

The protein resides in the secreted. Its subcellular location is the extracellular space. It localises to the extracellular matrix. It is found in the surface film. In terms of biological role, contributes to the lung's defense against inhaled microorganisms, organic antigens and toxins. Interacts with compounds such as bacterial lipopolysaccharides, oligosaccharides and fatty acids and modulates leukocyte action in immune response. May participate in the extracellular reorganization or turnover of pulmonary surfactant. Binds strongly maltose residues and to a lesser extent other alpha-glucosyl moieties. This Macaca mulatta (Rhesus macaque) protein is Pulmonary surfactant-associated protein D (SFTPD).